The following is a 362-amino-acid chain: Probable dual-specificity RNA methyltransferase RlmN (362 aa).

Catalysis depends on Glu91, which acts as the Proton acceptor. Positions 97–329 (QHYGLSVCVT…KKNGVNCVVR (233 aa)) constitute a Radical SAM core domain. An intrachain disulfide couples Cys104 to Cys340. Cys111, Cys115, and Cys118 together coordinate [4Fe-4S] cluster. S-adenosyl-L-methionine is bound by residues 163 to 164 (GE), Ser195, 218 to 220 (SLH), and Asn296. Cys340 (S-methylcysteine intermediate) is an active-site residue.

Belongs to the radical SAM superfamily. RlmN family. It depends on [4Fe-4S] cluster as a cofactor.

The protein localises to the cytoplasm. It carries out the reaction adenosine(2503) in 23S rRNA + 2 reduced [2Fe-2S]-[ferredoxin] + 2 S-adenosyl-L-methionine = 2-methyladenosine(2503) in 23S rRNA + 5'-deoxyadenosine + L-methionine + 2 oxidized [2Fe-2S]-[ferredoxin] + S-adenosyl-L-homocysteine. The catalysed reaction is adenosine(37) in tRNA + 2 reduced [2Fe-2S]-[ferredoxin] + 2 S-adenosyl-L-methionine = 2-methyladenosine(37) in tRNA + 5'-deoxyadenosine + L-methionine + 2 oxidized [2Fe-2S]-[ferredoxin] + S-adenosyl-L-homocysteine. Specifically methylates position 2 of adenine 2503 in 23S rRNA and position 2 of adenine 37 in tRNAs. The polypeptide is Probable dual-specificity RNA methyltransferase RlmN (Streptococcus sanguinis (strain SK36)).